The following is a 119-amino-acid chain: MARFVVVPLLVLVSLFGLEAIQHPPKIQVYSRYPADNGKPNFLNCYVSGFHPSDIEVDLLKNGKKIEKVEHSDLSFSKDWSFYLLYYTEFTPNEKDEYACRVSHVTFSTPKTVKWDRNM.

The signal sequence occupies residues 1 to 20 (MARFVVVPLLVLVSLFGLEA). The 90-residue stretch at 25–114 (PKIQVYSRYP…VTFSTPKTVK (90 aa)) folds into the Ig-like C1-type domain. A disulfide bond links Cys45 and Cys100.

It belongs to the beta-2-microglobulin family. As to quaternary structure, heterodimer of an alpha chain and a beta chain. Beta-2-microglobulin is the beta-chain of major histocompatibility complex class I molecules.

It is found in the secreted. Functionally, component of the class I major histocompatibility complex (MHC). Involved in the presentation of peptide antigens to the immune system. The polypeptide is Beta-2-microglobulin (B2M) (Saguinus oedipus (Cotton-top tamarin)).